The chain runs to 253 residues: Shikimate dehydrogenase (253 aa).

Lys63 serves as the catalytic Proton acceptor. Residue 115 to 119 (GAGGA) participates in NADP(+) binding.

This sequence belongs to the shikimate dehydrogenase family.

The catalysed reaction is shikimate + NADP(+) = 3-dehydroshikimate + NADPH + H(+). The protein operates within metabolic intermediate biosynthesis; chorismate biosynthesis; chorismate from D-erythrose 4-phosphate and phosphoenolpyruvate: step 4/7. The chain is Shikimate dehydrogenase (aroE) from Thermotoga neapolitana (strain ATCC 49049 / DSM 4359 / NBRC 107923 / NS-E).